A 101-amino-acid polypeptide reads, in one-letter code: MQVLVRDNNVDQALKALKKKMQREGIFREMKLRGHYEKPSEKKAREKAEAVRRARKLARKKLQREGLLPMKPKPAFGAERGRPGAGGPGAGGPGAGPRGPR.

Over residues 36 to 52 (YEKPSEKKAREKAEAVR) the composition is skewed to basic and acidic residues. Positions 36-101 (YEKPSEKKAR…GPGAGPRGPR (66 aa)) are disordered. A compositionally biased stretch (basic residues) spans 53–62 (RARKLARKKL). The segment covering 83–101 (PGAGGPGAGGPGAGPRGPR) has biased composition (gly residues).

Belongs to the bacterial ribosomal protein bS21 family.

The sequence is that of Small ribosomal subunit protein bS21 from Rhodopseudomonas palustris (strain HaA2).